A 134-amino-acid polypeptide reads, in one-letter code: Galectin-1 (134 aa).

The residue at position 1 (alanine 1) is an N-acetylalanine. The Galectin domain maps to 4–134; it reads GVAVTNLNLK…GLAFKSITTE (131 aa). A beta-D-galactoside-binding positions include 45–49, histidine 53, asparagine 62, and 69–72; these read HFNAR and WGSE.

As to quaternary structure, homodimer.

The protein localises to the secreted. It localises to the extracellular space. Its subcellular location is the extracellular matrix. Functionally, may regulate cell apoptosis and cell differentiation. Binds beta-galactoside and a wide array of complex carbohydrates. The polypeptide is Galectin-1 (Rhinella arenarum (Argentine common toad)).